Here is a 359-residue protein sequence, read N- to C-terminus: Membrane-bound lytic murein transglycosylase C (359 aa).

Positions 1–16 (MKKYLALALIAPLLIS) are cleaved as a signal peptide. Residue cysteine 17 is the site of N-palmitoyl cysteine attachment. Residue cysteine 17 is the site of S-diacylglycerol cysteine attachment.

This sequence belongs to the transglycosylase Slt family.

The protein resides in the cell outer membrane. The enzyme catalyses Exolytic cleavage of the (1-&gt;4)-beta-glycosidic linkage between N-acetylmuramic acid (MurNAc) and N-acetylglucosamine (GlcNAc) residues in peptidoglycan, from either the reducing or the non-reducing ends of the peptidoglycan chains, with concomitant formation of a 1,6-anhydrobond in the MurNAc residue.. In terms of biological role, murein-degrading enzyme. May play a role in recycling of muropeptides during cell elongation and/or cell division. The chain is Membrane-bound lytic murein transglycosylase C from Shigella sonnei (strain Ss046).